Reading from the N-terminus, the 229-residue chain is Dephospho-CoA kinase (229 aa).

The DPCK domain occupies 3 to 203 (TVGLTGGIGS…ARRDAKATAK (201 aa)). 11 to 16 (GSGKSA) is an ATP binding site. A disordered region spans residues 203-229 (KATAKAETVASGTDTAASGTDTAAPAG).

Belongs to the CoaE family.

It localises to the cytoplasm. It carries out the reaction 3'-dephospho-CoA + ATP = ADP + CoA + H(+). The protein operates within cofactor biosynthesis; coenzyme A biosynthesis; CoA from (R)-pantothenate: step 5/5. Catalyzes the phosphorylation of the 3'-hydroxyl group of dephosphocoenzyme A to form coenzyme A. In Frankia casuarinae (strain DSM 45818 / CECT 9043 / HFP020203 / CcI3), this protein is Dephospho-CoA kinase.